The sequence spans 185 residues: Ribosome-recycling factor (185 aa).

The protein belongs to the RRF family.

The protein resides in the cytoplasm. In terms of biological role, responsible for the release of ribosomes from messenger RNA at the termination of protein biosynthesis. May increase the efficiency of translation by recycling ribosomes from one round of translation to another. The sequence is that of Ribosome-recycling factor from Streptococcus gordonii (strain Challis / ATCC 35105 / BCRC 15272 / CH1 / DL1 / V288).